The chain runs to 144 residues: Large ribosomal subunit protein uL11 (144 aa).

This sequence belongs to the universal ribosomal protein uL11 family. Part of the ribosomal stalk of the 50S ribosomal subunit. Interacts with L10 and the large rRNA to form the base of the stalk. L10 forms an elongated spine to which L12 dimers bind in a sequential fashion forming a multimeric L10(L12)X complex. In terms of processing, one or more lysine residues are methylated.

Forms part of the ribosomal stalk which helps the ribosome interact with GTP-bound translation factors. This is Large ribosomal subunit protein uL11 from Marinomonas sp. (strain MWYL1).